The primary structure comprises 561 residues: uncharacterized protein (561 aa).

A run of 6 helical transmembrane segments spans residues 27-49 (ILEF…GLLI), 54-71 (FFGI…ALAL), 83-105 (LVYQ…SEFF), 115-137 (LTLF…IKLF), 142-162 (IIGA…AAMV), and 177-199 (VVGY…AIGA). Positions 292-373 (QQDVPIEDTD…MSEVRRFLGD (82 aa)) constitute an RCK C-terminal domain. Helical transmembrane passes span 383–405 (LMPF…PLPG), 409–428 (LSLG…GALN), 441–463 (ASRT…SAGV), and 478–500 (IAGG…MPLF).

This sequence belongs to the AAE transporter (TC 2.A.81) family.

It is found in the cell membrane. This is an uncharacterized protein from Corynebacterium diphtheriae (strain ATCC 700971 / NCTC 13129 / Biotype gravis).